Here is a 97-residue protein sequence, read N- to C-terminus: Acylphosphatase (97 aa).

One can recognise an Acylphosphatase-like domain in the interval Thr11–His97. Active-site residues include Arg26 and Asn44. The disordered stretch occupies residues Arg76–His97. Residues Gly82–His97 show a composition bias toward basic and acidic residues.

This sequence belongs to the acylphosphatase family.

It carries out the reaction an acyl phosphate + H2O = a carboxylate + phosphate + H(+). The polypeptide is Acylphosphatase (acyP) (Paraburkholderia xenovorans (strain LB400)).